A 699-amino-acid polypeptide reads, in one-letter code: eEF1A lysine and N-terminal methyltransferase (699 aa).

N-acetylmethionine is present on methionine 1. Serine 267 bears the Phosphoserine mark. The interval 433–459 (VSHKAQKKRKKDRKKQRPADAEDLPAA) is disordered. The segment covering 436-448 (KAQKKRKKDRKKQ) has biased composition (basic residues).

This sequence belongs to the methyltransferase superfamily. As to quaternary structure, forms a tripartite complex containing GAB1, METTL13 and SPRY2. Within the complex interacts with GAB1 and SPRY2.

It localises to the cytoplasm. Its subcellular location is the nucleus. The protein localises to the mitochondrion. It catalyses the reaction L-lysyl-[protein] + S-adenosyl-L-methionine = N(6)-methyl-L-lysyl-[protein] + S-adenosyl-L-homocysteine + H(+). The enzyme catalyses N(6)-methyl-L-lysyl-[protein] + S-adenosyl-L-methionine = N(6),N(6)-dimethyl-L-lysyl-[protein] + S-adenosyl-L-homocysteine + H(+). The catalysed reaction is N-terminal glycyl-L-lysyl-L-glutamyl-[protein] + 3 S-adenosyl-L-methionine = N-terminal N,N,N-trimethyl-glycyl-L-lysyl-L-glutamyl-[protein] + 3 S-adenosyl-L-homocysteine + 3 H(+). With respect to regulation, protein N-terminal methyltransferase activity is inhibited by GTP and GDP. Its function is as follows. Dual methyltransferase that catalyzes methylation of elongation factor 1-alpha (EEF1A1 and EEF1A2) at two different positions, and is therefore involved in the regulation of mRNA translation. Via its C-terminus, methylates EEF1A1 and EEF1A2 at the N-terminal residue 'Gly-2'. Via its N-terminus dimethylates EEF1A1 and EEF1A2 at residue 'Lys-55'. Has no activity towards core histones H2A, H2B, H3 and H4. In Homo sapiens (Human), this protein is eEF1A lysine and N-terminal methyltransferase.